We begin with the raw amino-acid sequence, 206 residues long: 3-demethoxyubiquinol 3-hydroxylase (206 aa).

Glu-55, Glu-85, His-88, Glu-137, Glu-169, and His-172 together coordinate Fe cation.

Belongs to the COQ7 family. It depends on Fe cation as a cofactor.

Its subcellular location is the cell membrane. It catalyses the reaction a 5-methoxy-2-methyl-3-(all-trans-polyprenyl)benzene-1,4-diol + AH2 + O2 = a 3-demethylubiquinol + A + H2O. It participates in cofactor biosynthesis; ubiquinone biosynthesis. In terms of biological role, catalyzes the hydroxylation of 2-nonaprenyl-3-methyl-6-methoxy-1,4-benzoquinol during ubiquinone biosynthesis. In Chromobacterium violaceum (strain ATCC 12472 / DSM 30191 / JCM 1249 / CCUG 213 / NBRC 12614 / NCIMB 9131 / NCTC 9757 / MK), this protein is 3-demethoxyubiquinol 3-hydroxylase.